The sequence spans 492 residues: 3-octaprenyl-4-hydroxybenzoate carboxy-lyase (492 aa).

Asn175 contributes to the Mn(2+) binding site. Prenylated FMN-binding positions include 178 to 180 (IYR), 192 to 194 (RWL), and 197 to 198 (RG). Position 241 (Glu241) interacts with Mn(2+). Asp290 functions as the Proton donor in the catalytic mechanism.

This sequence belongs to the UbiD family. Homohexamer. Requires prenylated FMN as cofactor. It depends on Mn(2+) as a cofactor.

It is found in the cell membrane. The enzyme catalyses a 4-hydroxy-3-(all-trans-polyprenyl)benzoate + H(+) = a 2-(all-trans-polyprenyl)phenol + CO2. It participates in cofactor biosynthesis; ubiquinone biosynthesis. Catalyzes the decarboxylation of 3-octaprenyl-4-hydroxy benzoate to 2-octaprenylphenol, an intermediate step in ubiquinone biosynthesis. This chain is 3-octaprenyl-4-hydroxybenzoate carboxy-lyase, found in Salmonella typhimurium (strain LT2 / SGSC1412 / ATCC 700720).